The primary structure comprises 253 residues: ATP synthase subunit b 1 (253 aa).

A helical transmembrane segment spans residues G5–Y27.

The protein belongs to the ATPase B chain family. As to quaternary structure, F-type ATPases have 2 components, F(1) - the catalytic core - and F(0) - the membrane proton channel. F(1) has five subunits: alpha(3), beta(3), gamma(1), delta(1), epsilon(1). F(0) has three main subunits: a(1), b(2) and c(10-14). The alpha and beta chains form an alternating ring which encloses part of the gamma chain. F(1) is attached to F(0) by a central stalk formed by the gamma and epsilon chains, while a peripheral stalk is formed by the delta and b chains.

The protein localises to the cell inner membrane. In terms of biological role, f(1)F(0) ATP synthase produces ATP from ADP in the presence of a proton or sodium gradient. F-type ATPases consist of two structural domains, F(1) containing the extramembraneous catalytic core and F(0) containing the membrane proton channel, linked together by a central stalk and a peripheral stalk. During catalysis, ATP synthesis in the catalytic domain of F(1) is coupled via a rotary mechanism of the central stalk subunits to proton translocation. Component of the F(0) channel, it forms part of the peripheral stalk, linking F(1) to F(0). The protein is ATP synthase subunit b 1 of Rhodospirillum centenum (strain ATCC 51521 / SW).